A 404-amino-acid polypeptide reads, in one-letter code: Probable tRNA sulfurtransferase (404 aa).

Residues 60–165 enclose the THUMP domain; sequence QPIVEALKLV…DEAAYISYEE (106 aa). ATP is bound by residues 183 to 184, 208 to 209, arginine 265, glycine 287, and glutamine 296; these read ML and HF.

It belongs to the ThiI family.

The protein localises to the cytoplasm. It carries out the reaction [ThiI sulfur-carrier protein]-S-sulfanyl-L-cysteine + a uridine in tRNA + 2 reduced [2Fe-2S]-[ferredoxin] + ATP + H(+) = [ThiI sulfur-carrier protein]-L-cysteine + a 4-thiouridine in tRNA + 2 oxidized [2Fe-2S]-[ferredoxin] + AMP + diphosphate. The catalysed reaction is [ThiS sulfur-carrier protein]-C-terminal Gly-Gly-AMP + S-sulfanyl-L-cysteinyl-[cysteine desulfurase] + AH2 = [ThiS sulfur-carrier protein]-C-terminal-Gly-aminoethanethioate + L-cysteinyl-[cysteine desulfurase] + A + AMP + 2 H(+). It functions in the pathway cofactor biosynthesis; thiamine diphosphate biosynthesis. In terms of biological role, catalyzes the ATP-dependent transfer of a sulfur to tRNA to produce 4-thiouridine in position 8 of tRNAs, which functions as a near-UV photosensor. Also catalyzes the transfer of sulfur to the sulfur carrier protein ThiS, forming ThiS-thiocarboxylate. This is a step in the synthesis of thiazole, in the thiamine biosynthesis pathway. The sulfur is donated as persulfide by IscS. This chain is Probable tRNA sulfurtransferase, found in Streptococcus pyogenes serotype M3 (strain ATCC BAA-595 / MGAS315).